We begin with the raw amino-acid sequence, 243 residues long: 1-(5-phosphoribosyl)-5-[(5-phosphoribosylamino)methylideneamino] imidazole-4-carboxamide isomerase (243 aa).

D17 functions as the Proton acceptor in the catalytic mechanism. The active-site Proton donor is the D138.

Belongs to the HisA/HisF family.

The protein localises to the cytoplasm. The catalysed reaction is 1-(5-phospho-beta-D-ribosyl)-5-[(5-phospho-beta-D-ribosylamino)methylideneamino]imidazole-4-carboxamide = 5-[(5-phospho-1-deoxy-D-ribulos-1-ylimino)methylamino]-1-(5-phospho-beta-D-ribosyl)imidazole-4-carboxamide. The protein operates within amino-acid biosynthesis; L-histidine biosynthesis; L-histidine from 5-phospho-alpha-D-ribose 1-diphosphate: step 4/9. The chain is 1-(5-phosphoribosyl)-5-[(5-phosphoribosylamino)methylideneamino] imidazole-4-carboxamide isomerase from Deinococcus geothermalis (strain DSM 11300 / CIP 105573 / AG-3a).